We begin with the raw amino-acid sequence, 862 residues long: Chaperone protein ClpB 1 (862 aa).

A Clp R domain is found at 5–147 (AEQFTEQAWA…KEAITAVRGN (143 aa)). 2 repeat regions span residues 8–72 (FTEQ…LQRL) and 84–147 (LGRS…VRGN). An NBD1 region spans residues 160 to 341 (ESLAKYGRDL…RRFQQVLVDQ (182 aa)). 207-214 (GEPGVGKT) contributes to the ATP binding site. The interval 342–550 (PTVPDTISIL…IAEVIAKWTG (209 aa)) is linker. A coiled-coil region spans residues 392-526 (IDLVDESAAR…QEDLLEDEDG (135 aa)). The interval 560-771 (EMEKLLQLED…RLDDQIIFRS (212 aa)) is NBD2. 610–617 (GPTGVGKT) contacts ATP. The tract at residues 772-862 (LEKEELRRIV…DAGDDKLSIS (91 aa)) is C-terminal.

The protein belongs to the ClpA/ClpB family. Homohexamer. The oligomerization is ATP-dependent.

The protein resides in the cytoplasm. Part of a stress-induced multi-chaperone system, it is involved in the recovery of the cell from heat-induced damage, in cooperation with DnaK, DnaJ and GrpE. Acts before DnaK, in the processing of protein aggregates. Protein binding stimulates the ATPase activity; ATP hydrolysis unfolds the denatured protein aggregates, which probably helps expose new hydrophobic binding sites on the surface of ClpB-bound aggregates, contributing to the solubilization and refolding of denatured protein aggregates by DnaK. This chain is Chaperone protein ClpB 1 (clpB1), found in Parasynechococcus marenigrum (strain WH8102).